The chain runs to 65 residues: Beta-toxin Tf4a (65 aa).

Positions 2-63 (KEGYPADSKG…VWDSATNKCG (62 aa)) constitute an LCN-type CS-alpha/beta domain. 4 cysteine pairs are disulfide-bonded: Cys12–Cys62, Cys16–Cys38, Cys24–Cys43, and Cys28–Cys45. Cys62 bears the Cysteine amide mark.

Belongs to the long (4 C-C) scorpion toxin superfamily. Sodium channel inhibitor family. Alpha subfamily. Expressed by the venom gland.

The protein resides in the secreted. In terms of biological role, alpha toxins bind voltage-independently at site-3 of sodium channels (Nav) and inhibit the inactivation of the activated channels, thereby blocking neuronal transmission. This toxin is toxic to frogs but non-toxic to insect larvae (T.molitor), mammals (rats) and crustaceans (crabs) at the doses assayed. In Tityus fasciolatus (Central Brazilian scorpion), this protein is Beta-toxin Tf4a.